A 98-amino-acid chain; its full sequence is NADH-ubiquinone oxidoreductase chain 4L (98 aa).

3 consecutive transmembrane segments (helical) span residues 1-21 (MTLIHMNILMAFSMSLVGLLM), 29-49 (ALLCLEGMMLSLFILAALTIL), and 61-81 (IILLVFAACEAAIGLALLVMV).

The protein belongs to the complex I subunit 4L family. As to quaternary structure, core subunit of respiratory chain NADH dehydrogenase (Complex I) which is composed of 45 different subunits.

The protein resides in the mitochondrion inner membrane. It catalyses the reaction a ubiquinone + NADH + 5 H(+)(in) = a ubiquinol + NAD(+) + 4 H(+)(out). In terms of biological role, core subunit of the mitochondrial membrane respiratory chain NADH dehydrogenase (Complex I) which catalyzes electron transfer from NADH through the respiratory chain, using ubiquinone as an electron acceptor. Part of the enzyme membrane arm which is embedded in the lipid bilayer and involved in proton translocation. This is NADH-ubiquinone oxidoreductase chain 4L (MT-ND4L) from Balaenoptera omurai (Omura's baleen whale).